The primary structure comprises 642 residues: Chaperone protein DnaK (642 aa).

Threonine 200 carries the phosphothreonine; by autocatalysis modification. Positions alanine 603 to lysine 623 are enriched in low complexity. Residues alanine 603–aspartate 627 are disordered.

This sequence belongs to the heat shock protein 70 family.

Its function is as follows. Acts as a chaperone. The sequence is that of Chaperone protein DnaK from Xanthomonas campestris pv. campestris (strain B100).